A 470-amino-acid polypeptide reads, in one-letter code: Asparagine--tRNA ligase (470 aa).

The protein belongs to the class-II aminoacyl-tRNA synthetase family. In terms of assembly, homodimer.

It is found in the cytoplasm. The enzyme catalyses tRNA(Asn) + L-asparagine + ATP = L-asparaginyl-tRNA(Asn) + AMP + diphosphate + H(+). The polypeptide is Asparagine--tRNA ligase (Blochmanniella floridana).